Reading from the N-terminus, the 1244-residue chain is Protein MMS22-like (1244 aa).

Belongs to the MMS22 family. MMS22L subfamily. Component of the MMS22L-TONSL complex, a complex at least composed of MMS22L and TONSL/NFKBIL2. Interacts with RAD51; interaction is direct. Degraded by the ubiquitin-proteasome system upon replication stress.

The protein localises to the nucleus. It localises to the chromosome. Functionally, component of the MMS22L-TONSL complex, a complex that promotes homologous recombination-mediated repair of double-strand breaks (DSBs) at stalled or collapsed replication forks. The MMS22L-TONSL complex is required to maintain genome integrity during DNA replication. It mediates the assembly of RAD51 filaments on single-stranded DNA (ssDNA): the MMS22L-TONSL complex is recruited to DSBs following histone replacement by histone chaperones and eviction of the replication protein A complex (RPA/RP-A) from DSBs. Following recruitment to DSBs, the TONSL-MMS22L complex promotes recruitment of RAD51 filaments and subsequent homologous recombination. Within the complex, MMS22L acts by binding ssDNA. The polypeptide is Protein MMS22-like (MMS22L) (Bos taurus (Bovine)).